A 1591-amino-acid polypeptide reads, in one-letter code: Rho guanine nucleotide exchange factor TIAM1 (1591 aa).

The segment at methionine 1–glutamine 78 is disordered. The N-myristoyl glycine moiety is linked to residue glycine 2. Residues glutamine 7–alanine 19 are compositionally biased toward basic and acidic residues. Over residues serine 20 to histidine 49 the composition is skewed to basic residues. Residues glutamate 53–serine 67 are compositionally biased toward low complexity. Serine 231 is modified (phosphoserine). 2 disordered regions span residues serine 298–alanine 379 and methionine 393–glutamine 422. Polar residues-rich tracts occupy residues glycine 300–glutamine 313 and threonine 340–threonine 361. Phosphoserine is present on residues serine 356 and serine 358. The segment covering glycine 367–aspartate 377 has biased composition (low complexity). Over residues glutamine 412 to glutamine 422 the composition is skewed to polar residues. Positions valine 434–alanine 549 constitute a PH 1 domain. Phosphoserine is present on serine 695. One can recognise an RBD domain in the interval threonine 765–leucine 832. Tyrosine 829 is subject to Phosphotyrosine; by NTRK2. In terms of domain architecture, PDZ spans serine 845 to serine 908. The disordered stretch occupies residues serine 939 to glutamine 1034. The span at leucine 958–glutamate 975 shows a compositional bias: polar residues. Over residues alanine 977 to aspartate 990 the composition is skewed to acidic residues. The segment covering proline 1014–serine 1024 has biased composition (low complexity). Positions threonine 1025 to glutamine 1034 are enriched in polar residues. The 195-residue stretch at lysine 1040 to methionine 1234 folds into the DH domain. The region spanning aspartate 1261–lysine 1397 is the PH 2 domain. Tyrosine 1323 bears the Phosphotyrosine mark. Glycyl lysine isopeptide (Lys-Gly) (interchain with G-Cter in ubiquitin) cross-links involve residues lysine 1404 and lysine 1420. The segment at threonine 1456–arginine 1482 is disordered. The residue at position 1519 (serine 1519) is a Phosphoserine.

Belongs to the TIAM family. In terms of assembly, component of the Par polarity complex, composed of at least phosphorylated PRKCZ, PARD3 and TIAM1. Interacts with NTRK2; mediates the activation of RAC1 by BDNF. Interacts with MAPK8IP2 and CD44. Interacts with BAIAP2. Interacts with EPHA8; regulates clathrin-mediated endocytosis of EPHA8. Interacts with PARD3. Interacts (via PDZ domain) with CNTNAP4, SDC1 and SDC3 (via C-terminus). Ubiquitinated. Undergoes 'Lys-48' ubiquitination at Lys-1404 and Lys-1420 by a CUL3(KBTBD6/7) E3 ubiquitin ligase complex composed of CUL3, RBX1, KBTBD6 and KBTBD7. 'Lys-48' ubiquitination at Lys-1404 and Lys-1420 triggers proteasomal degradation. Ubiquitination at Lys-1404 and Lys-1420 by CUL3(KBTBD6/7) also requires the membrane-associated protein GABARAP and may therefore be spatially restricted within the cell. As to expression, found in virtually all analyzed tumor cell lines including B- and T-lymphomas, neuroblastomas, melanomas and carcinomas.

The protein resides in the cell junction. It is found in the cell membrane. Guanyl-nucleotide exchange factor that activates RHO-like proteins and connects extracellular signals to cytoskeletal activities. Activates RAC1, CDC42, and to a lesser extent RHOA and their downstream signaling to regulate processes like cell adhesion and cell migration. The protein is Rho guanine nucleotide exchange factor TIAM1 of Homo sapiens (Human).